Here is a 207-residue protein sequence, read N- to C-terminus: Protein LURP1 (207 aa).

Belongs to the LOR family. In terms of tissue distribution, limited to discrete pathogen infection sites in leaves.

Its function is as follows. Involved in basal defense against virulent oomycetes. Might be related to the phospholipid scramblase and tubby-like superfamily of membrane tethered transcription factors. The chain is Protein LURP1 (LURP1) from Arabidopsis thaliana (Mouse-ear cress).